The chain runs to 1379 residues: Vascular endothelial growth factor receptor 3 (1379 aa).

The first 19 residues, 1 to 19, serve as a signal peptide directing secretion; sequence MKRVCTLPLWLWLGIVSEA. Residues 20–788 are Extracellular-facing; that stretch reads DLVSSYSMTP…EGSDDKTNVE (769 aa). 7 consecutive Ig-like C2-type domains span residues 30 to 136, 160 to 222, 240 to 335, 340 to 421, 430 to 566, 569 to 684, and 691 to 777; these read PTLS…TAVS, KENT…IDNK, DIQL…TDVI, PFIN…KRIS, PRIH…FYVT, PDGF…KYIS, and PRLK…ASVS. Disulfide bonds link C51–C120 and C167–C215. The interval 73–93 is disordered; the sequence is RRWNSQPQQRPVGAGNPEEDC. 4 N-linked (GlcNAc...) asparagine glycosylation sites follow: N113, N175, N260, and N308. Cysteines 261 and 319 form a disulfide. Intrachain disulfides connect C453–C548, C474–C500, and C592–C666. Residues N529, N541, N596, N608, N655, N696, and N703 are each glycosylated (N-linked (GlcNAc...) asparagine). Residues C712 and C761 are joined by a disulfide bond. A glycan (N-linked (GlcNAc...) asparagine) is linked at N771. The helical transmembrane segment at 789–809 threads the bilayer; it reads IVILIGTGVIAVFFWILLIII. The Cytoplasmic segment spans residues 810 to 1379; that stretch reads FCNIKRPAHA…LHASFFSEQY (570 aa). In terms of domain architecture, Protein kinase spans 858–1185; the sequence is LRLGKVLGHG…DLVEILGNLL (328 aa). ATP-binding positions include 864 to 872 and K892; that span reads LGHGAFGKV. The active-site Proton acceptor is D1049. 2 positions are modified to phosphotyrosine; by autocatalysis: Y1075 and Y1080. Residues 1196-1224 form a disordered region; the sequence is YIPLNDSHSSEDDGFSQVPSSAQQNSDEE. A phosphotyrosine; by autocatalysis mark is found at Y1239, Y1240, Y1274, Y1342, and Y1346. The disordered stretch occupies residues 1299 to 1379; the sequence is RHRKEGGFSS…LHASFFSEQY (81 aa). Residues 1332–1343 are compositionally biased toward polar residues; the sequence is YGSQVGGQTFYN.

The protein belongs to the protein kinase superfamily. Tyr protein kinase family. CSF-1/PDGF receptor subfamily. Interacts with VEGFC and VEGFD. Monomer in the absence of bound VEGFC or VEGFD. Homodimer in the presence of bound VEGFC or VEGFD. Post-translationally, autophosphorylated on tyrosine residues upon ligand binding. Autophosphorylation occurs in trans, i.e. one subunit of the dimeric receptor phosphorylates tyrosine residues on the other subunit.

It is found in the cell membrane. The protein localises to the cytoplasm. Its subcellular location is the nucleus. It catalyses the reaction L-tyrosyl-[protein] + ATP = O-phospho-L-tyrosyl-[protein] + ADP + H(+). With respect to regulation, present in an inactive conformation in the absence of bound ligand. Binding of VEGFC or VEGFD leads to dimerization and activation by autophosphorylation on tyrosine residues. Functionally, tyrosine-protein kinase that acts as a cell-surface receptor for VEGFC and VEGFD, and plays an essential role in lymphangiogenesis and in the development of the vascular network and the cardiovascular system during embryonic development. Promotes proliferation, survival and migration of endothelial cells, and regulates angiogenic sprouting. Mediates activation of the MAPK1/ERK2, MAPK3/ERK1 signaling pathway, of MAPK8 and the JUN signaling pathway, and of the AKT1 signaling pathway. This chain is Vascular endothelial growth factor receptor 3 (FLT4), found in Coturnix coturnix (Common quail).